Reading from the N-terminus, the 314-residue chain is MERQNQSCVVEFILLGFSNYPELQGQLFVAFLVIYLVTLIGNAIIIVIVSLDQSLHVPMYLFLLNLSVVDLSFSAVIMPEMLVVLSTEKTTISFGGCFAQMYFILLFGGAECFLLGAMAYDRFAAICHPLNYQMIMNKGVFMKLIIFSWALGFMLGTVQTSWVSSFPFCGLNEINHISCETPAVLELACADTFLFEIYAFTGTFLIILVPFLLILLSYIRVLFAILKMPSTTGRQKAFSTCAAHLTSVTLFYGTASMTYLQPKSGYSPETKKVMSLSYSLLTPLLNLLIYSLRNSEMKRALMKLWRRRVVLHTI.

At Met-1–Gly-25 the chain is on the extracellular side. Asn-5 carries an N-linked (GlcNAc...) asparagine glycan. A helical membrane pass occupies residues Gln-26 to Ile-46. Topologically, residues Val-47–Ser-54 are cytoplasmic. Residues Leu-55–Ala-75 form a helical membrane-spanning segment. At Val-76–Ala-99 the chain is on the extracellular side. A disulfide bond links Cys-97 and Cys-189. The helical transmembrane segment at Gln-100–Tyr-120 threads the bilayer. Topologically, residues Asp-121–Gly-139 are cytoplasmic. Residues Val-140–Thr-160 form a helical membrane-spanning segment. At Ser-161–Ile-197 the chain is on the extracellular side. Residues Tyr-198 to Ser-217 traverse the membrane as a helical segment. Residues Tyr-218–Ala-237 are Cytoplasmic-facing. Residues Phe-238 to Thr-258 traverse the membrane as a helical segment. Topologically, residues Tyr-259–Lys-271 are extracellular. A helical transmembrane segment spans residues Lys-272 to Leu-292. Topologically, residues Arg-293 to Ile-314 are cytoplasmic.

It belongs to the G-protein coupled receptor 1 family.

It localises to the cell membrane. Functionally, odorant receptor. This is Olfactory receptor 10A6 (OR10A6) from Homo sapiens (Human).